Reading from the N-terminus, the 232-residue chain is Glutathione-specific gamma-glutamylcyclotransferase (232 aa).

Residue 10-15 (VLGYGS) participates in substrate binding. The Proton acceptor role is filled by Glu115.

Belongs to the gamma-glutamylcyclotransferase family. ChaC subfamily.

It localises to the cytoplasm. Its subcellular location is the nucleus. The catalysed reaction is glutathione = L-cysteinylglycine + 5-oxo-L-proline. Catalyzes the cleavage of glutathione into 5-oxo-L-proline and a Cys-Gly dipeptide. Acts specifically on glutathione, but not on other gamma-glutamyl peptides. Allows utilization of gluthathione through subsequent cleavage of the Cys-Gly dipeptide by Cys-Gly metallodipeptidase DUG1. This chain is Glutathione-specific gamma-glutamylcyclotransferase, found in Saccharomyces cerevisiae (strain ATCC 204508 / S288c) (Baker's yeast).